The following is a 494-amino-acid chain: UDP-N-acetylmuramate--L-alanine ligase (494 aa).

Residue 122-128 participates in ATP binding; the sequence is GTHGKTT.

The protein belongs to the MurCDEF family.

Its subcellular location is the cytoplasm. The catalysed reaction is UDP-N-acetyl-alpha-D-muramate + L-alanine + ATP = UDP-N-acetyl-alpha-D-muramoyl-L-alanine + ADP + phosphate + H(+). Its pathway is cell wall biogenesis; peptidoglycan biosynthesis. In terms of biological role, cell wall formation. The protein is UDP-N-acetylmuramate--L-alanine ligase of Mycobacterium bovis (strain ATCC BAA-935 / AF2122/97).